Here is a 538-residue protein sequence, read N- to C-terminus: Hydroxylamine reductase (538 aa).

Residues C3, C6, C15, and C21 each coordinate [4Fe-4S] cluster. Residues H239, E263, C307, C394, C422, C447, E481, and K483 each coordinate hybrid [4Fe-2O-2S] cluster. C394 is subject to Cysteine persulfide.

The protein belongs to the HCP family. [4Fe-4S] cluster is required as a cofactor. Hybrid [4Fe-2O-2S] cluster serves as cofactor.

It localises to the cytoplasm. It carries out the reaction A + NH4(+) + H2O = hydroxylamine + AH2 + H(+). Functionally, catalyzes the reduction of hydroxylamine to form NH(3) and H(2)O. The chain is Hydroxylamine reductase from Solidesulfovibrio magneticus (strain ATCC 700980 / DSM 13731 / RS-1) (Desulfovibrio magneticus).